We begin with the raw amino-acid sequence, 295 residues long: Nucleotide-binding protein MCA0739 (295 aa).

8–15 (GFSGSGKS) is an ATP binding site. 60 to 63 (DARN) is a binding site for GTP.

It belongs to the RapZ-like family.

In terms of biological role, displays ATPase and GTPase activities. The chain is Nucleotide-binding protein MCA0739 from Methylococcus capsulatus (strain ATCC 33009 / NCIMB 11132 / Bath).